We begin with the raw amino-acid sequence, 157 residues long: Ribosomal RNA large subunit methyltransferase H (157 aa).

S-adenosyl-L-methionine contacts are provided by residues leucine 73, glycine 105, and 124–129 (LSRMTF).

Belongs to the RNA methyltransferase RlmH family. Homodimer.

Its subcellular location is the cytoplasm. The catalysed reaction is pseudouridine(1915) in 23S rRNA + S-adenosyl-L-methionine = N(3)-methylpseudouridine(1915) in 23S rRNA + S-adenosyl-L-homocysteine + H(+). Functionally, specifically methylates the pseudouridine at position 1915 (m3Psi1915) in 23S rRNA. This chain is Ribosomal RNA large subunit methyltransferase H, found in Porphyromonas gingivalis (strain ATCC BAA-308 / W83).